The primary structure comprises 215 residues: Uridine kinase (215 aa).

16-23 (GASASGKS) is a binding site for ATP.

The protein belongs to the uridine kinase family.

It is found in the cytoplasm. The catalysed reaction is uridine + ATP = UMP + ADP + H(+). The enzyme catalyses cytidine + ATP = CMP + ADP + H(+). It participates in pyrimidine metabolism; CTP biosynthesis via salvage pathway; CTP from cytidine: step 1/3. Its pathway is pyrimidine metabolism; UMP biosynthesis via salvage pathway; UMP from uridine: step 1/1. The sequence is that of Uridine kinase from Aliivibrio salmonicida (strain LFI1238) (Vibrio salmonicida (strain LFI1238)).